The chain runs to 526 residues: Cytochrome P450 monooxygenase milC (526 aa).

Residues 2 to 20 (AIHAAYIFIAATLIALYVA) traverse the membrane as a helical segment. Cysteine 470 contributes to the heme binding site.

Belongs to the cytochrome P450 family. The cofactor is heme.

Its subcellular location is the membrane. It catalyses the reaction cordypyrone A + reduced [NADPH--hemoprotein reductase] + O2 = cordypyrone B + oxidized [NADPH--hemoprotein reductase] + H2O + H(+). It functions in the pathway secondary metabolite biosynthesis. In terms of biological role, cytochrome P450 monooxygenase; part of the gene cluster that mediates the biosynthesis of cordypyrones A and B, 2 pyrones that show modest activities against pathogenic bacteria including methicillin-resistant Staphylococcus aureus (MRSA), Mycobacterium tuberculosis and Bacillus cereus. The HR-PKS milA catalyzes the formation of cordypyrones A via condensation of one acetate with 10 malonate units. Since milA lacks an enoyl reductase domain, the 2 beta-keto processing domains DH and KR of milA collaborate with the trans-enoyl reductase milB to catalyze the different levels of reduction. The cytochrome P450 monooxygenase milC then hydroxylates the C-22 of cordypyrones A to yield cordypyrones B. This is Cytochrome P450 monooxygenase milC from Cordyceps militaris (strain CM01) (Caterpillar fungus).